A 521-amino-acid polypeptide reads, in one-letter code: Alkyl hydroperoxide reductase subunit F (521 aa).

213 to 228 is an FAD binding site; it reads DVLVVGGGPAGAAAAI. An intrachain disulfide couples C344 to C347. Residue 356-370 coordinates NAD(+); sequence RVAVIGGGNSGVEAA. 477-487 serves as a coordination point for FAD; sequence TSLPGIFAAGD.

This sequence belongs to the class-II pyridine nucleotide-disulfide oxidoreductase family. Homodimer. FAD is required as a cofactor.

Its function is as follows. Serves to protect the cell against DNA damage by alkyl hydroperoxides. It can use either NADH or NADPH as electron donor for direct reduction of redox dyes or of alkyl hydroperoxides when combined with the AhpC protein. The chain is Alkyl hydroperoxide reductase subunit F (ahpF) from Pseudomonas aeruginosa (strain ATCC 15692 / DSM 22644 / CIP 104116 / JCM 14847 / LMG 12228 / 1C / PRS 101 / PAO1).